Consider the following 246-residue polypeptide: tRNA pseudouridine synthase C (246 aa).

D58 is a catalytic residue.

It belongs to the pseudouridine synthase RluA family.

It catalyses the reaction uridine(65) in tRNA = pseudouridine(65) in tRNA. Functionally, responsible for synthesis of pseudouridine from uracil-65 in transfer RNAs. The polypeptide is tRNA pseudouridine synthase C (truC) (Vibrio parahaemolyticus serotype O3:K6 (strain RIMD 2210633)).